Here is a 449-residue protein sequence, read N- to C-terminus: Delta(8)-fatty-acid desaturase 1 (449 aa).

The 85-residue stretch at 7–91 (KKYITNEDLK…IRDFQVSEVS (85 aa)) folds into the Cytochrome b5 heme-binding domain. Histidine 42 and histidine 65 together coordinate heme. The next 2 helical transmembrane spans lie at 113–133 (VTLY…YGVL) and 138–158 (VFAH…SAYI). The short motif at 160–164 (HDSGH) is the Histidine box-1 element. Residues 173 to 195 (YNRFAQLLSGNCLTGISIAWWKW) form a helical membrane-spanning segment. The Histidine box-2 signature appears at 197–201 (HNAHH). 3 consecutive transmembrane segments (helical) span residues 255–275 (YYPV…LLLF), 284–304 (ALNF…VSCL), and 311–331 (FFFV…FTLN). A Histidine box-3 motif is present at residues 374 to 378 (QLEHH).

Belongs to the fatty acid desaturase type 1 family. The cofactor is Fe cation. In terms of tissue distribution, highly expressed in flowers. Expressed in roots, leaves, stems and siliques.

It is found in the endoplasmic reticulum membrane. The catalysed reaction is an N-acyl-(4R)-4-hydroxysphinganine + 2 Fe(II)-[cytochrome b5] + O2 + 2 H(+) = a (4R,8E)-4-hydroxysphingenine ceramide + 2 Fe(III)-[cytochrome b5] + 2 H2O. It carries out the reaction an N-acyl-(4R)-4-hydroxysphinganine + 2 Fe(II)-[cytochrome b5] + O2 + 2 H(+) = a (4R,8Z)-4-hydroxysphing-8-enine ceramide + 2 Fe(III)-[cytochrome b5] + 2 H2O. In terms of biological role, plays a major role as delta(8)-fatty-acid desaturase which introduces a double bond at the 8-position in the long-chain base (LCB) of ceramides with or without a hydroxy group at the 4-position. The enzyme produces both the 8E and 8Z isomers (in a 4:1 ratio). This structural modification contributes to the quantitative partitioning of ceramides between the two major sphingolipid classes, glucosylceramides and glycosylinositolphosphoryl ceramides. Sphingolipids are important membrane components involved in environmental stress responses, such as resistance to chilling, and act as cell signaling molecules. The chain is Delta(8)-fatty-acid desaturase 1 (SLD1) from Arabidopsis thaliana (Mouse-ear cress).